A 338-amino-acid polypeptide reads, in one-letter code: Phenylalanine--tRNA ligase alpha subunit (338 aa).

Glutamate 252 provides a ligand contact to Mg(2+).

It belongs to the class-II aminoacyl-tRNA synthetase family. Phe-tRNA synthetase alpha subunit type 1 subfamily. As to quaternary structure, tetramer of two alpha and two beta subunits. Mg(2+) is required as a cofactor.

It localises to the cytoplasm. It carries out the reaction tRNA(Phe) + L-phenylalanine + ATP = L-phenylalanyl-tRNA(Phe) + AMP + diphosphate + H(+). The protein is Phenylalanine--tRNA ligase alpha subunit of Ectopseudomonas mendocina (strain ymp) (Pseudomonas mendocina).